The sequence spans 180 residues: Der GTPase-activating protein YihI (180 aa).

2 disordered regions span residues 1–87 and 142–180; these read MSRK…MTKQ and GLLEPEEEEDFTASSAKGSRNDDDLLADFDDINFDDYKG. Positions 23–32 are enriched in basic and acidic residues; that stretch reads NRTESDVEGR. The span at 33–43 shows a compositional bias: basic residues; that stretch reads LRKRAKKRKGL. Positions 51 to 68 are enriched in basic and acidic residues; sequence EVNEQKKQSSEQNRDPRL. Over residues 165–180 the composition is skewed to acidic residues; the sequence is DLLADFDDINFDDYKG.

It belongs to the YihI family. Interacts with Der.

In terms of biological role, a GTPase-activating protein (GAP) that modifies Der/EngA GTPase function. May play a role in ribosome biogenesis. The sequence is that of Der GTPase-activating protein YihI from Vibrio parahaemolyticus serotype O3:K6 (strain RIMD 2210633).